Consider the following 580-residue polypeptide: V-type proton ATPase catalytic subunit A (580 aa).

An ATP-binding site is contributed by 209 to 216; sequence GAFGCGKT.

This sequence belongs to the ATPase alpha/beta chains family. In terms of assembly, V-ATPase is a heteromultimeric enzyme composed of a peripheral catalytic V1 complex (main components: subunits A, B, C, D, E, and F) attached to an integral membrane V0 proton pore complex (main component: the proteolipid protein).

The catalysed reaction is ATP + H2O + 4 H(+)(in) = ADP + phosphate + 5 H(+)(out). Functionally, catalytic subunit of the peripheral V1 complex of vacuolar ATPase. V-ATPase vacuolar ATPase is responsible for acidifying a variety of intracellular compartments in eukaryotic cells. The chain is V-type proton ATPase catalytic subunit A from Hordeum vulgare (Barley).